Here is a 373-residue protein sequence, read N- to C-terminus: tRNA-specific 2-thiouridylase MnmA (373 aa).

ATP contacts are provided by residues 12 to 19 (GMSGGVDS) and Met38. The interaction with target base in tRNA stretch occupies residues 98 to 100 (NPD). Cys103 (nucleophile) is an active-site residue. Cys103 and Cys200 form a disulfide bridge. Gly127 serves as a coordination point for ATP. Positions 150 to 152 (KDQ) are interaction with tRNA. The active-site Cysteine persulfide intermediate is Cys200. Residues 312–313 (RY) are interaction with tRNA.

Belongs to the MnmA/TRMU family.

It localises to the cytoplasm. The enzyme catalyses S-sulfanyl-L-cysteinyl-[protein] + uridine(34) in tRNA + AH2 + ATP = 2-thiouridine(34) in tRNA + L-cysteinyl-[protein] + A + AMP + diphosphate + H(+). In terms of biological role, catalyzes the 2-thiolation of uridine at the wobble position (U34) of tRNA, leading to the formation of s(2)U34. In Streptococcus agalactiae serotype III (strain NEM316), this protein is tRNA-specific 2-thiouridylase MnmA.